Reading from the N-terminus, the 127-residue chain is Protein SPIRAL1-like 4 (127 aa).

Positions 1-127 (MGKARGVNSG…FGSGPCGSDK (127 aa)) are disordered. Residues 39-48 (TTTTTTTTTT) are compositionally biased toward low complexity. Ser-80 is modified (phosphoserine). Residues 80 to 94 (SPNNYYRSDGQNCGN) show a composition bias toward polar residues.

The protein belongs to the SPIRAL1 family. Ubiquitous.

Acts redundantly with SPR1 in maintaining the cortical microtubules organization essential for anisotropic cell growth. This chain is Protein SPIRAL1-like 4 (SP1L4), found in Arabidopsis thaliana (Mouse-ear cress).